The chain runs to 148 residues: Snaclec B9 (148 aa).

An N-terminal signal peptide occupies residues 1 to 24 (MGRFIFVSFGLLVVFLSLSGTGAA). Cystine bridges form between cysteine 27-cysteine 38, cysteine 55-cysteine 144, and cysteine 121-cysteine 136. The C-type lectin domain maps to 34–145 (YDQHCYKVFD…CRLLGHFVCK (112 aa)). N-linked (GlcNAc...) asparagine glycosylation is found at asparagine 57 and asparagine 60.

This sequence belongs to the snaclec family. As to quaternary structure, heterodimer; disulfide-linked. In terms of tissue distribution, expressed by the venom gland.

It localises to the secreted. Functionally, interferes with one step of hemostasis (modulation of platelet aggregation, or coagulation cascade, for example). In Macrovipera lebetinus (Levantine viper), this protein is Snaclec B9.